The chain runs to 487 residues: Probable peptidoglycan glycosyltransferase FtsW (487 aa).

9 helical membrane passes run 30–50 (VSLI…VTSA), 71–91 (IYIV…MQWW), 93–113 (TSNA…LLVG), 122–142 (WLAI…FFFC), 167–187 (VVFF…TVVV), 203–223 (LWQF…LIMF), 282–302 (FIMA…VLAL), 332–352 (IGIW…GILP), and 358–378 (FPLL…VGLL). Disordered stretches follow at residues 398–419 (KAKA…SAGK) and 444–487 (IDSI…DGYV). The span at 401 to 416 (ASTSSSRKNKPKTASS) shows a compositional bias: polar residues. Residues 444 to 453 (IDSIMDDFAQ) show a composition bias toward acidic residues.

It belongs to the SEDS family. FtsW subfamily.

The protein resides in the cell inner membrane. The catalysed reaction is [GlcNAc-(1-&gt;4)-Mur2Ac(oyl-L-Ala-gamma-D-Glu-L-Lys-D-Ala-D-Ala)](n)-di-trans,octa-cis-undecaprenyl diphosphate + beta-D-GlcNAc-(1-&gt;4)-Mur2Ac(oyl-L-Ala-gamma-D-Glu-L-Lys-D-Ala-D-Ala)-di-trans,octa-cis-undecaprenyl diphosphate = [GlcNAc-(1-&gt;4)-Mur2Ac(oyl-L-Ala-gamma-D-Glu-L-Lys-D-Ala-D-Ala)](n+1)-di-trans,octa-cis-undecaprenyl diphosphate + di-trans,octa-cis-undecaprenyl diphosphate + H(+). It participates in cell wall biogenesis; peptidoglycan biosynthesis. Its function is as follows. Peptidoglycan polymerase that is essential for cell division. This Pseudoalteromonas atlantica (strain T6c / ATCC BAA-1087) protein is Probable peptidoglycan glycosyltransferase FtsW.